A 686-amino-acid chain; its full sequence is Translation initiation factor IF-2 (686 aa).

The tract at residues 61-98 (FEVEEKVVRSKKNSNKKKKKGKGNEDKRQENFAGRQQT) is disordered. The span at 69-81 (RSKKNSNKKKKKG) shows a compositional bias: basic residues. Positions 188-357 (ERPAVVTIMG…LLVSEVEEYK (170 aa)) constitute a tr-type G domain. The interval 197 to 204 (GHVDHGKT) is G1. 197-204 (GHVDHGKT) contributes to the GTP binding site. The interval 222 to 226 (GITQH) is G2. A G3 region spans residues 243–246 (DTPG). GTP contacts are provided by residues 243 to 247 (DTPGH) and 297 to 300 (NKMD). A G4 region spans residues 297–300 (NKMD). Residues 333 to 335 (SAI) form a G5 region.

It belongs to the TRAFAC class translation factor GTPase superfamily. Classic translation factor GTPase family. IF-2 subfamily.

Its subcellular location is the cytoplasm. In terms of biological role, one of the essential components for the initiation of protein synthesis. Protects formylmethionyl-tRNA from spontaneous hydrolysis and promotes its binding to the 30S ribosomal subunits. Also involved in the hydrolysis of GTP during the formation of the 70S ribosomal complex. This Bacillus cereus (strain B4264) protein is Translation initiation factor IF-2.